Here is a 299-residue protein sequence, read N- to C-terminus: N-acetylmuramic acid 6-phosphate etherase (299 aa).

The SIS domain occupies 57–220; sequence ISAAFHKKGR…TTGAMIRTGK (164 aa). Glu-85 (proton donor) is an active-site residue. The active site involves Glu-116.

This sequence belongs to the GCKR-like family. MurNAc-6-P etherase subfamily. Homodimer.

The enzyme catalyses N-acetyl-D-muramate 6-phosphate + H2O = N-acetyl-D-glucosamine 6-phosphate + (R)-lactate. The protein operates within amino-sugar metabolism; 1,6-anhydro-N-acetylmuramate degradation. It participates in amino-sugar metabolism; N-acetylmuramate degradation. It functions in the pathway cell wall biogenesis; peptidoglycan recycling. In terms of biological role, specifically catalyzes the cleavage of the D-lactyl ether substituent of MurNAc 6-phosphate, producing GlcNAc 6-phosphate and D-lactate. Together with AnmK, is also required for the utilization of anhydro-N-acetylmuramic acid (anhMurNAc) either imported from the medium or derived from its own cell wall murein, and thus plays a role in cell wall recycling. In Psychromonas ingrahamii (strain DSM 17664 / CCUG 51855 / 37), this protein is N-acetylmuramic acid 6-phosphate etherase.